The sequence spans 1011 residues: Unconventional myosin ID (1011 aa).

In terms of domain architecture, Myosin motor spans 7–690; that stretch reads AGVQDFVLLD…TLFALEHQRN (684 aa). 100 to 107 lines the ATP pocket; that stretch reads GESGAGKT. Residues 567–589 are actin-binding; that stretch reads MADLVVTLLKKEPFYVRCIKPND. 2 consecutive IQ domains span residues 694-714 and 716-736; these read PHIV…RNFK and MKAA…SYVQ. A TH1 domain is found at 806 to 1007; sequence AGRRPYWGQA…EGNIIFEVPA (202 aa).

Belongs to the TRAFAC class myosin-kinesin ATPase superfamily. Myosin family. In terms of assembly, binds to F-actin. Interacts with arm. Interacts with shg. Interacts with ds (via intracellular region). As to expression, in the embryo, expressed in gastric caeca, midgut cells of the proventriculus, and in the mid and hindgut. In the larval gut brush border, expression is in the terminal web domain. In the adult gut brush border, expression remains in the web domain and has also moved into the microvilli. Also expressed at low levels in follicle cells during oogenesis.

It localises to the cytoplasm. The protein resides in the cell cortex. The protein localises to the cytoskeleton. Its subcellular location is the cell membrane. It is found in the cell junction. It localises to the adherens junction. The protein resides in the cell projection. Its function is as follows. Unconventional myosin that functions as actin-based motor protein with ATPase activity. Binds to membranes enriched in phosphatidylinositol 4-5-bisphosphate, and can glide along actin filaments when anchored to a lipid bilayer. Generates left-right asymmetry at the level of single cells, organs and the whole body via its interaction with the actin cytoskeleton, both in the embryo and the adult. Normal left-right asymmetry of the larval midgut and hindgut requires expression in the embryonic hindgut epithelium during a critical time period, 10 to 12.75 hours after egg laying. This period corresponds to a late stage of germband retraction, and precedes left-right asymmetric morphogenesis. Expression in segment H1 of the imaginal ring is required at 0 to 24 hours after pupation for changes of cell shape and orientation in the H2 segment, which then gives rise to normal, dextral looping of the adult hindgut. Required during a critical period, 126-132 hours after egg laying, for normal, dextral rotation of the adult male genitalia. Has a double role by promoting dextral rotation in the posterior compartment of segment A8 of the male genital disk, and in repressing sinistral looping in the anterior compartment. The sequence is that of Unconventional myosin ID from Drosophila melanogaster (Fruit fly).